The following is a 307-amino-acid chain: Reaction center protein M chain (307 aa).

A Blocked amino end (Ala) modification is found at alanine 2. The next 3 helical transmembrane spans lie at 45–69, 103–123, and 133–153; these read FWNA…FAQV, GWWL…YMHI, and KPYL…IYII. A (7R,8Z)-bacteriochlorophyll b-binding site is contributed by histidine 192. A helical transmembrane segment spans residues 196 to 216; the sequence is IFFLLGSTLLLAMHAGTIWAL. Histidine 209, glutamate 236, and histidine 256 together coordinate Fe cation. A helical membrane pass occupies residues 257–277; the sequence is LWAFWFAWLCGITGALGVFFS.

Belongs to the reaction center PufL/M/PsbA/D family. As to quaternary structure, reaction center is composed of four bacteriochlorophylls, two bacteriopheophytins, two ubiquinones, one iron, and two highly hydrophobic polypeptide chains (designated L and M).

The protein localises to the cell membrane. Functionally, the reaction center is a membrane-bound complex that mediates the initial photochemical event in the electron transfer process of photosynthesis. This Chloroflexus aurantiacus (strain ATCC 29366 / DSM 635 / J-10-fl) protein is Reaction center protein M chain (pufM).